A 292-amino-acid polypeptide reads, in one-letter code: Cyclin-dependent kinase 5 (292 aa).

A Protein kinase domain is found at 4 to 286 (YEKLEKIGEG…AEEALQHPYF (283 aa)). ATP contacts are provided by residues 10–18 (IGEGTYGTV) and Lys33. Tyr15 is subject to Phosphotyrosine; by ABL1, EPHA4 and FYN. Position 17 is a phosphothreonine (Thr17). The residue at position 56 (Lys56) is an N6-acetyllysine. Residue Ser72 is modified to Phosphoserine. Asp126 serves as the catalytic Proton acceptor. At Ser159 the chain carries Phosphoserine.

This sequence belongs to the protein kinase superfamily. CMGC Ser/Thr protein kinase family. CDC2/CDKX subfamily. As to quaternary structure, heterodimer composed of a catalytic subunit CDK5 and a regulatory subunit CDK5R1 (p25) and macromolecular complex composed of at least CDK5, CDK5R1 (p35) and CDK5RAP1 or CDK5RAP2 or CDK5RAP3. Only the heterodimer shows kinase activity. Under neurotoxic stress and neuronal injury conditions, p35 is cleaved by calpain to generate p25 that hyperactivates CDK5, that becomes functionally disabled and often toxic. Found in a trimolecular complex with CABLES1 and ABL1. Interacts with CABLES1 and CABLES2. Interacts with AATK and GSTP1. Binds to HDAC1 when in complex with p25. Interaction with myristoylation p35 promotes CDK5 association with membranes. Both isoforms 1 and 2 interacts with beta-catenin/CTNNB1. Interacts with delta-catenin/CTNND2 and APEX1. Interacts with P53/TP53 in neurons. Interacts with PTK2/FAK1. Interacts with EPHA4; may mediate the activation of NGEF by EPHA4. The complex p35/CDK5 interacts with CLOCK. Interacts with HTR6. In terms of processing, phosphorylation on Tyr-15 by ABL1 and FYN, and on Ser-159 by casein kinase 1 promotes kinase activity. By contrast, phosphorylation at Thr-14 inhibits activity. Phosphorylation at Ser-159 is essential for maximal catalytic activity. Expressed in hippocampal neuronal synaptic termini (at protein level). Expressed predominantly in post-mitotic neurons of the central and peripheral nervous system.

The protein resides in the cytoplasm. It localises to the nucleus. The protein localises to the cell membrane. Its subcellular location is the perikaryon. It is found in the cell projection. The protein resides in the lamellipodium. It localises to the growth cone. The protein localises to the postsynaptic density. Its subcellular location is the synapse. It carries out the reaction L-seryl-[protein] + ATP = O-phospho-L-seryl-[protein] + ADP + H(+). It catalyses the reaction L-threonyl-[protein] + ATP = O-phospho-L-threonyl-[protein] + ADP + H(+). With respect to regulation, inhibited by 2-(1-ethyl-2-hydroxyethylamino)-6-benzylamino-9-isopropylpurine (roscovitine), 1-isopropyl-4-aminobenzyl-6-ether-linked benzimidazoles, resveratrol, AT-7519 and olomoucine. Activated by CDK5R1 (p35) and CDK5R2 (p39) during the development of the nervous system; degradation of CDK5R1 (p35) and CDK5R2 (p39) by proteasome result in down regulation of kinase activity, during this process, CDK5 phosphorylates p35 and induces its ubiquitination and subsequent degradation. Kinase activity is mainly determined by the amount of p35 available and subcellular location; reversible association to plasma membrane inhibits activity. Long-term inactivation as well as CDK5R1 (p25)-mediated hyperactivation of CDK5 triggers cell death. The pro-death activity of hyperactivated CDK5 is suppressed by membrane association of CDK5, via myristoylation of p35. Brain-derived neurotrophic factor, glial-derived neurotrophic factor, nerve growth factor (NGF), retinoic acid, laminin and neuregulin promote activity. Neurotoxicity enhances nuclear activity, thus leading to MEF2 phosphorylation and inhibition prior to apoptosis of cortical neurons. Repression by GSTP1 via p25/p35 translocation prevents neurodegeneration. Its function is as follows. Proline-directed serine/threonine-protein kinase essential for neuronal cell cycle arrest and differentiation and may be involved in apoptotic cell death in neuronal diseases by triggering abortive cell cycle re-entry. Interacts with D1 and D3-type G1 cyclins. Phosphorylates SRC, NOS3, VIM/vimentin, p35/CDK5R1, MEF2A, SIPA1L1, SH3GLB1, PXN, PAK1, MCAM/MUC18, SEPT5, SYN1, DNM1, AMPH, SYNJ1, CDK16, RAC1, RHOA, CDC42, TONEBP/NFAT5, MAPT/TAU, MAP1B, histone H1, p53/TP53, HDAC1, APEX1, PTK2/FAK1, huntingtin/HTT, ATM, MAP2, NEFH and NEFM. Regulates several neuronal development and physiological processes including neuronal survival, migration and differentiation, axonal and neurite growth, synaptogenesis, oligodendrocyte differentiation, synaptic plasticity and neurotransmission, by phosphorylating key proteins. Negatively regulates the CACNA1B/CAV2.2 -mediated Ca(2+) release probability at hippocampal neuronal soma and synaptic terminals. Activated by interaction with CDK5R1 (p35) and CDK5R2 (p39), especially in postmitotic neurons, and promotes CDK5R1 (p35) expression in an autostimulation loop. Phosphorylates many downstream substrates such as Rho and Ras family small GTPases (e.g. PAK1, RAC1, RHOA, CDC42) or microtubule-binding proteins (e.g. MAPT/TAU, MAP2, MAP1B), and modulates actin dynamics to regulate neurite growth and/or spine morphogenesis. Also phosphorylates exocytosis associated proteins such as MCAM/MUC18, SEPT5, SYN1, and CDK16/PCTAIRE1 as well as endocytosis associated proteins such as DNM1, AMPH and SYNJ1 at synaptic terminals. In the mature central nervous system (CNS), regulates neurotransmitter movements by phosphorylating substrates associated with neurotransmitter release and synapse plasticity; synaptic vesicle exocytosis, vesicles fusion with the presynaptic membrane, and endocytosis. Promotes cell survival by activating anti-apoptotic proteins BCL2 and STAT3, and negatively regulating of JNK3/MAPK10 activity. Phosphorylation of p53/TP53 in response to genotoxic and oxidative stresses enhances its stabilization by preventing ubiquitin ligase-mediated proteasomal degradation, and induces transactivation of p53/TP53 target genes, thus regulating apoptosis. Phosphorylation of p35/CDK5R1 enhances its stabilization by preventing calpain-mediated proteolysis producing p25/CDK5R1 and avoiding ubiquitin ligase-mediated proteasomal degradation. During aberrant cell-cycle activity and DNA damage, p25/CDK5 activity elicits cell-cycle activity and double-strand DNA breaks that precedes neuronal death by deregulating HDAC1. DNA damage triggered phosphorylation of huntingtin/HTT in nuclei of neurons protects neurons against polyglutamine expansion as well as DNA damage mediated toxicity. Phosphorylation of PXN reduces its interaction with PTK2/FAK1 in matrix-cell focal adhesions (MCFA) during oligodendrocytes (OLs) differentiation. Negative regulator of Wnt/beta-catenin signaling pathway. Activator of the GAIT (IFN-gamma-activated inhibitor of translation) pathway, which suppresses expression of a post-transcriptional regulon of proinflammatory genes in myeloid cells; phosphorylates the linker domain of glutamyl-prolyl tRNA synthetase (EPRS) in a IFN-gamma-dependent manner, the initial event in assembly of the GAIT complex. Phosphorylation of SH3GLB1 is required for autophagy induction in starved neurons. Phosphorylation of TONEBP/NFAT5 in response to osmotic stress mediates its rapid nuclear localization. MEF2 is inactivated by phosphorylation in nucleus in response to neurotoxin, thus leading to neuronal apoptosis. APEX1 AP-endodeoxyribonuclease is repressed by phosphorylation, resulting in accumulation of DNA damage and contributing to neuronal death. NOS3 phosphorylation down regulates NOS3-derived nitrite (NO) levels. SRC phosphorylation mediates its ubiquitin-dependent degradation and thus leads to cytoskeletal reorganization. May regulate endothelial cell migration and angiogenesis via the modulation of lamellipodia formation. Involved in dendritic spine morphogenesis by mediating the EFNA1-EPHA4 signaling. The complex p35/CDK5 participates in the regulation of the circadian clock by modulating the function of CLOCK protein: phosphorylates CLOCK at 'Thr-451' and 'Thr-461' and regulates the transcriptional activity of the CLOCK-BMAL1 heterodimer in association with altered stability and subcellular distribution. This is Cyclin-dependent kinase 5 from Rattus norvegicus (Rat).